A 268-amino-acid polypeptide reads, in one-letter code: Tryptophan synthase alpha chain (268 aa).

Residues Glu49 and Asp60 each act as proton acceptor in the active site.

Belongs to the TrpA family. As to quaternary structure, tetramer of two alpha and two beta chains.

It carries out the reaction (1S,2R)-1-C-(indol-3-yl)glycerol 3-phosphate + L-serine = D-glyceraldehyde 3-phosphate + L-tryptophan + H2O. The protein operates within amino-acid biosynthesis; L-tryptophan biosynthesis; L-tryptophan from chorismate: step 5/5. In terms of biological role, the alpha subunit is responsible for the aldol cleavage of indoleglycerol phosphate to indole and glyceraldehyde 3-phosphate. This chain is Tryptophan synthase alpha chain, found in Escherichia coli (strain SMS-3-5 / SECEC).